The following is a 397-amino-acid chain: Mannonate dehydratase (397 aa).

It belongs to the mannonate dehydratase family. It depends on Fe(2+) as a cofactor. Mn(2+) is required as a cofactor.

The catalysed reaction is D-mannonate = 2-dehydro-3-deoxy-D-gluconate + H2O. It functions in the pathway carbohydrate metabolism; pentose and glucuronate interconversion. In terms of biological role, catalyzes the dehydration of D-mannonate. This Yersinia pestis bv. Antiqua (strain Angola) protein is Mannonate dehydratase.